Consider the following 141-residue polypeptide: MAEDPEAVLQLPAAPAAAAGESLLELSPETAIPEPPSSVAVSPGTEEPPGDTKKKIDILLKAVGDTPIMKTKKWAVERTRTVQALIDFIRKFLRLLASEQLFIYVNQSFAPSPDQEVGTLYECFGSDGKLVLHYCKSQAWG.

The interval 24–54 is disordered; it reads LELSPETAIPEPPSSVAVSPGTEEPPGDTKK. Glycine 141 participates in a covalent cross-link: Glycyl lysine isopeptide (Gly-Lys) (interchain with K-? in acceptor protein).

It belongs to the ATG12 family. As to quaternary structure, forms a conjugate with ATG5. Part of the minor complex composed of 4 sets of ATG12-ATG5 and ATG16L1 (400 kDa); this complex interacts with ATG3 leading to disruption of ATG7 interaction and promotion of ATG8-like proteins lipidation. Forms an 800-kDa complex composed of ATG12-ATG5 and ATG16L2. Interacts with DHX58/RIG-1, IFIH1/MDA5 and MAVS/IPS-1 in monomeric form as well as in ATG12-ATG5 conjugate. The interaction with MAVS is further enhanced upon vesicular stomatitis virus (VSV) infection. Interacts with ATG3; this interaction is essential for phosphatidylethanolamine (PE)-conjugated ATG8-like proteins formation. Interacts with ATG7. Interacts with ATG10. The ATG12-ATG5 conjugate interacts with RAB33A; this interaction is bridged by ATG16L1 and promotes ATG12-ATG5-ATG16L1 complex recruitment to phagophores. Interacts with TECPR1. Interacts with SH3BGRL. The ATG12-ATG5 conjugate interacts with PDCD6IP (via the BRO1 domain); this interaction is bridged by ATG12 and promotes multiple PDCD6IP-mediated functions such as endolysosomal trafficking, macroautophagy and exosome biogenesis. In terms of processing, acetylated by EP300.

The protein resides in the cytoplasm. It is found in the preautophagosomal structure membrane. Its function is as follows. Ubiquitin-like protein involved in autophagy vesicles formation. Conjugation with ATG5 through a ubiquitin-like conjugating system involving also ATG7 as an E1-like activating enzyme and ATG10 as an E2-like conjugating enzyme, is essential for its function. The ATG12-ATG5 conjugate acts as an E3-like enzyme which is required for lipidation of ATG8 family proteins and their association to the vesicle membranes. The ATG12-ATG5 conjugate also negatively regulates the innate antiviral immune response by blocking the type I IFN production pathway through direct association with RARRES3 and MAVS. Also plays a role in translation or delivery of incoming viral RNA to the translation apparatus. As part of the ATG8 conjugation system with ATG5 and ATG16L1, required for recruitment of LRRK2 to stressed lysosomes and induction of LRRK2 kinase activity in response to lysosomal stress. The chain is Ubiquitin-like protein ATG12 from Rattus norvegicus (Rat).